The following is a 37-amino-acid chain: Large ribosomal subunit protein bL36 (37 aa).

It belongs to the bacterial ribosomal protein bL36 family.

The polypeptide is Large ribosomal subunit protein bL36 (Synechococcus elongatus (strain ATCC 33912 / PCC 7942 / FACHB-805) (Anacystis nidulans R2)).